The primary structure comprises 52 residues: Ovomucoid (52 aa).

The region spanning 2-52 (VDCSEYPKPACPKDYRPVCGSDNKTYGNKCNFCNAVVESNGTLTLNRFGKC) is the Kazal-like domain. 3 disulfides stabilise this stretch: Cys4–Cys34, Cys12–Cys31, and Cys20–Cys52. The N-linked (GlcNAc...) asparagine glycan is linked to Asn41.

The protein localises to the secreted. The sequence is that of Ovomucoid from Coturnix delegorguei (Harlequin quail).